Reading from the N-terminus, the 210-residue chain is MLAGLSPHLSNLRRSLTQVLNFALVLSTAFMMWKGLSIYTNSSSPIVVVLSGSMEPAFQRGDLLFLWNRSPRAEVGEIVVYNVRGKDIPIVHRVVRAFGDDEKSPKETNGQKKKKVMSSVKKDSIAAGALHSDSALVSHRILTKGDNNIADDTELYAQGQDYLDRKLDLVGSVRGYIPAVGYVTIMLSEHPWLKTVLLGIMGAMVILQRE.

At 1 to 21 the chain is on the cytoplasmic side; it reads MLAGLSPHLSNLRRSLTQVLN. Residues 22–38 traverse the membrane as a helical; Signal-anchor for type II membrane protein segment; that stretch reads FALVLSTAFMMWKGLSI. The Lumenal segment spans residues 39–210; it reads YTNSSSPIVV…MGAMVILQRE (172 aa). Asn41 carries an N-linked (GlcNAc...) asparagine glycan. Residues Ser53, His92, and Asp152 each act as charge relay system in the active site. The C-terminal short (CTS) helix stretch occupies residues 196–207; the sequence is VLLGIMGAMVIL.

This sequence belongs to the peptidase S26B family. Component of the signal peptidase complex (SPC) composed of a catalytic subunit SEC11 and three accessory subunits SPC1, SPC2 and SPC3. The complex induces a local thinning of the ER membrane which is used to measure the length of the signal peptide (SP) h-region of protein substrates. This ensures the selectivity of the complex towards h-regions shorter than 18-20 amino acids. SPC associates with the translocon complex.

It localises to the endoplasmic reticulum membrane. It carries out the reaction Cleavage of hydrophobic, N-terminal signal or leader sequences from secreted and periplasmic proteins.. Its function is as follows. Catalytic component of the signal peptidase complex (SPC) which catalyzes the cleavage of N-terminal signal sequences from nascent proteins as they are translocated into the lumen of the endoplasmic reticulum. Specifically cleaves N-terminal signal peptides that contain a hydrophobic alpha-helix (h-region) shorter than 18-20 amino acids. The polypeptide is Signal peptidase complex catalytic subunit SEC11 (SEC11) (Coccidioides posadasii (strain C735) (Valley fever fungus)).